Here is a 103-residue protein sequence, read N- to C-terminus: uncharacterized protein (103 aa).

This is an uncharacterized protein from Acanthamoeba polyphaga (Amoeba).